A 235-amino-acid polypeptide reads, in one-letter code: Thaumatin II (235 aa).

Positions 1 to 22 (MAATTCFFFLFPFLLLLTLSRA) are cleaved as a signal peptide. Disulfide bonds link C31/C226, C78/C88, C93/C99, C143/C215, C148/C199, C156/C167, C171/C180, and C181/C186. Positions 230 to 235 (LELEDE) are cleaved as a propeptide — removed in mature form.

This sequence belongs to the thaumatin family.

The protein localises to the cytoplasmic vesicle. Functionally, taste-modifying protein; intensely sweet-tasting. It is 100000 times sweeter than sucrose on a molar basis. This is Thaumatin II from Thaumatococcus daniellii (Katemfe).